Here is a 65-residue protein sequence, read N- to C-terminus: Conotoxin TsMRCL-05 (65 aa).

An N-terminal signal peptide occupies residues 1 to 22 (MHCLPVLVILLLLIASTPSVDA). Residues 23-52 (RPNPKDDVPLASFHGAVNAKRYLRTLWNSR) constitute a propeptide that is removed on maturation. Ile64 is subject to Isoleucine amide.

It belongs to the conotoxin T superfamily. In terms of processing, contains 2 disulfide bonds that can be either 'C1-C3, C2-C4' or 'C1-C4, C2-C3', since these disulfide connectivities have been observed for conotoxins with cysteine framework V (for examples, see AC P0DQQ7 and AC P81755). In terms of tissue distribution, expressed by the venom duct.

The protein localises to the secreted. The chain is Conotoxin TsMRCL-05 from Conus tessulatus (Tessellate cone).